A 48-amino-acid chain; its full sequence is 4-carboxymuconolactone decarboxylase (48 aa).

Belongs to the carboxymuconolactone decarboxylase family.

It carries out the reaction (R)-2-(carboxymethyl)-5-oxo-2,5-dihydro-2-furoate + H(+) = (4,5-dihydro-5-oxofuran-2-yl)-acetate + CO2. Its pathway is aromatic compound metabolism; beta-ketoadipate pathway; 5-oxo-4,5-dihydro-2-furylacetate from 3-carboxy-cis,cis-muconate: step 2/2. This chain is 4-carboxymuconolactone decarboxylase, found in Pseudomonas putida (Arthrobacter siderocapsulatus).